The following is a 188-amino-acid chain: Acireductone dioxygenase (188 aa).

4 residues coordinate Fe(2+): H97, H99, E103, and H141. Positions 97, 99, 103, and 141 each coordinate Ni(2+).

Belongs to the acireductone dioxygenase (ARD) family. Monomer. Fe(2+) is required as a cofactor. Ni(2+) serves as cofactor.

It catalyses the reaction 1,2-dihydroxy-5-(methylsulfanyl)pent-1-en-3-one + O2 = 3-(methylsulfanyl)propanoate + CO + formate + 2 H(+). It carries out the reaction 1,2-dihydroxy-5-(methylsulfanyl)pent-1-en-3-one + O2 = 4-methylsulfanyl-2-oxobutanoate + formate + 2 H(+). Its pathway is amino-acid biosynthesis; L-methionine biosynthesis via salvage pathway; L-methionine from S-methyl-5-thio-alpha-D-ribose 1-phosphate: step 5/6. In terms of biological role, catalyzes 2 different reactions between oxygen and the acireductone 1,2-dihydroxy-3-keto-5-methylthiopentene (DHK-MTPene) depending upon the metal bound in the active site. Fe-containing acireductone dioxygenase (Fe-ARD) produces formate and 2-keto-4-methylthiobutyrate (KMTB), the alpha-ketoacid precursor of methionine in the methionine recycle pathway. Ni-containing acireductone dioxygenase (Ni-ARD) produces methylthiopropionate, carbon monoxide and formate, and does not lie on the methionine recycle pathway. The sequence is that of Acireductone dioxygenase from Xylella fastidiosa (strain M23).